The following is a 298-amino-acid chain: Inosose dehydratase 2 (298 aa).

The protein belongs to the IolE/MocC family. Glutathione serves as cofactor. It depends on Co(2+) as a cofactor. The cofactor is Mn(2+).

It carries out the reaction scyllo-inosose = 3D-3,5/4-trihydroxycyclohexane-1,2-dione + H2O. The protein operates within polyol metabolism; myo-inositol degradation into acetyl-CoA; acetyl-CoA from myo-inositol: step 2/7. Catalyzes the dehydration of inosose (2-keto-myo-inositol, 2KMI or 2,4,6/3,5-pentahydroxycyclohexanone) to 3D-(3,5/4)-trihydroxycyclohexane-1,2-dione (D-2,3-diketo-4-deoxy-epi-inositol). This chain is Inosose dehydratase 2, found in Bacillus cereus (strain ZK / E33L).